The chain runs to 114 residues: T cell receptor beta variable 5-4 (114 aa).

The first 21 residues, 1–21 (MGPGLLCWALLCLLGAGSVET), serve as a signal peptide directing secretion. The region spanning 22-114 (GVTQSPTHLI…SALYLCASSL (93 aa)) is the Ig-like domain. An intrachain disulfide couples C42 to C110. The N-linked (GlcNAc...) asparagine glycan is linked to N90.

As to quaternary structure, alpha-beta TR is a heterodimer composed of an alpha and beta chain; disulfide-linked. The alpha-beta TR is associated with the transmembrane signaling CD3 coreceptor proteins to form the TR-CD3 (TcR or TCR). The assembly of alpha-beta TR heterodimers with CD3 occurs in the endoplasmic reticulum where a single alpha-beta TR heterodimer associates with one CD3D-CD3E heterodimer, one CD3G-CD3E heterodimer and one CD247 homodimer forming a stable octameric structure. CD3D-CD3E and CD3G-CD3E heterodimers preferentially associate with TR alpha and TR beta chains, respectively. The association of the CD247 homodimer is the last step of TcR assembly in the endoplasmic reticulum and is required for transport to the cell surface.

The protein localises to the cell membrane. V region of the variable domain of T cell receptor (TR) beta chain that participates in the antigen recognition. Alpha-beta T cell receptors are antigen specific receptors which are essential to the immune response and are present on the cell surface of T lymphocytes. Recognize peptide-major histocompatibility (MH) (pMH) complexes that are displayed by antigen presenting cells (APC), a prerequisite for efficient T cell adaptive immunity against pathogens. Binding of alpha-beta TR to pMH complex initiates TR-CD3 clustering on the cell surface and intracellular activation of LCK that phosphorylates the ITAM motifs of CD3G, CD3D, CD3E and CD247 enabling the recruitment of ZAP70. In turn ZAP70 phosphorylates LAT, which recruits numerous signaling molecules to form the LAT signalosome. The LAT signalosome propagates signal branching to three major signaling pathways, the calcium, the mitogen-activated protein kinase (MAPK) kinase and the nuclear factor NF-kappa-B (NF-kB) pathways, leading to the mobilization of transcription factors that are critical for gene expression and essential for T cell growth and differentiation. The T cell repertoire is generated in the thymus, by V-(D)-J rearrangement. This repertoire is then shaped by intrathymic selection events to generate a peripheral T cell pool of self-MH restricted, non-autoaggressive T cells. Post-thymic interaction of alpha-beta TR with the pMH complexes shapes TR structural and functional avidity. The polypeptide is T cell receptor beta variable 5-4 (Homo sapiens (Human)).